The chain runs to 656 residues: DNA ligase (656 aa).

NAD(+) is bound by residues 32 to 36 (DAIYD) and 81 to 82 (SL). Catalysis depends on lysine 112, which acts as the N6-AMP-lysine intermediate. NAD(+) is bound by residues arginine 133, glutamate 167, and lysine 306. Residues cysteine 400, cysteine 403, cysteine 416, and cysteine 421 each coordinate Zn(2+). In terms of domain architecture, BRCT spans 577-656 (KSSSVFNNKT…ELLKRLKELD (80 aa)).

The protein belongs to the NAD-dependent DNA ligase family. LigA subfamily. Mg(2+) serves as cofactor. It depends on Mn(2+) as a cofactor.

The catalysed reaction is NAD(+) + (deoxyribonucleotide)n-3'-hydroxyl + 5'-phospho-(deoxyribonucleotide)m = (deoxyribonucleotide)n+m + AMP + beta-nicotinamide D-nucleotide.. In terms of biological role, DNA ligase that catalyzes the formation of phosphodiester linkages between 5'-phosphoryl and 3'-hydroxyl groups in double-stranded DNA using NAD as a coenzyme and as the energy source for the reaction. It is essential for DNA replication and repair of damaged DNA. The chain is DNA ligase from Helicobacter pylori (strain ATCC 700392 / 26695) (Campylobacter pylori).